We begin with the raw amino-acid sequence, 282 residues long: Large ribosomal subunit protein uL2 (282 aa).

The disordered stretch occupies residues 215-282 (RHKGIRPTVR…IIRSRKETKK (68 aa)). Positions 263 to 282 (RNPKKPSTKLIIRSRKETKK) are enriched in basic residues.

The protein belongs to the universal ribosomal protein uL2 family. As to quaternary structure, part of the 50S ribosomal subunit. Forms a bridge to the 30S subunit in the 70S ribosome.

Functionally, one of the primary rRNA binding proteins. Required for association of the 30S and 50S subunits to form the 70S ribosome, for tRNA binding and peptide bond formation. It has been suggested to have peptidyltransferase activity; this is somewhat controversial. Makes several contacts with the 16S rRNA in the 70S ribosome. The protein is Large ribosomal subunit protein uL2 of Mesomycoplasma hyopneumoniae (strain J / ATCC 25934 / NCTC 10110) (Mycoplasma hyopneumoniae).